The sequence spans 462 residues: NAD(P) transhydrogenase subunit beta (462 aa).

The Periplasmic segment spans residues 1–3 (MSG). The chain crosses the membrane as a helical span at residues 4–24 (GLVTAAYIVAAILFIFSLAGL). Topologically, residues 25–45 (SKHETSRQGNNFGIAGMAIAL) are cytoplasmic. The chain crosses the membrane as a helical span at residues 46 to 66 (IATIFGPDTGNVGWILLAMVI). At 67-82 (GGAIGIRLAKKVEMTE) the chain is on the periplasmic side. The chain crosses the membrane as a helical span at residues 83-103 (MPELVAILHSFVGLAAVLVGF). Over 104–115 (NSYLHHDAGMAP) the chain is Cytoplasmic. Residues 116-136 (ILVNIHLTEVFLGIFIGAVTF) form a helical membrane-spanning segment. The Periplasmic portion of the chain corresponds to 137–164 (TGSVVAFGKLCGKISSKPLMLPNRHKMN). A helical transmembrane segment spans residues 165 to 185 (LAALVVSFLLLIVFVRTDSVG). Residues 186 to 188 (LQV) are Cytoplasmic-facing. The helical transmembrane segment at 189 to 209 (LALLIMTAIALVFGWHLVASI) threads the bilayer. The Periplasmic portion of the chain corresponds to 210 to 215 (GGADMP). The chain crosses the membrane as a helical span at residues 216–236 (VVVSMLNSYSGWAAAAAGFML). Over 237–239 (SND) the chain is Cytoplasmic. A helical membrane pass occupies residues 240 to 260 (LLIVTGALVGSSGAILSYIMC). The Periplasmic portion of the chain corresponds to 261–308 (KAMNRSFISVIAGGFGTDGSSTGDDQEVGEHREITAEETAELLKNSHS). Residues 309-329 (VIITPGYGMAVAQAQYPVAEI) traverse the membrane as a helical segment. The Cytoplasmic segment spans residues 330–462 (TEKLRARGIN…ASVDAILKAL (133 aa)).

The protein belongs to the PNT beta subunit family. In terms of assembly, heterodimer of an alpha and a beta chain.

The protein resides in the cell inner membrane. It carries out the reaction NAD(+) + NADPH + H(+)(in) = NADH + NADP(+) + H(+)(out). In terms of biological role, the transhydrogenation between NADH and NADP is coupled to respiration and ATP hydrolysis and functions as a proton pump across the membrane. The polypeptide is NAD(P) transhydrogenase subunit beta (pntB) (Escherichia coli O157:H7).